The following is a 427-amino-acid chain: Acyl-lipid 8-desaturase (427 aa).

The tract at residues 1–24 (MGRGGDSSGQAHPAAELAVPSDRA) is disordered. The Cytochrome b5 heme-binding domain occupies 36-84 (IVLYGKRVDVTKFQRTHPGGSKVFRIFQDRDATEQFESYHSKRAIKMME). Heme contacts are provided by His52 and His75. The Histidine box-1 signature appears at 178-182 (HSVFK). The chain crosses the membrane as a helical span at residues 189–209 (VGWNNAAGYFLGFVQGYAVEW). Residues 213–218 (RHNTHH) carry the Histidine box-2 motif. 2 consecutive transmembrane segments (helical) span residues 261–281 (VPVMAILDLYWRLESIAYVAM) and 286–306 (MLPQALALVAHYAIVAWVFAG). A Histidine box-3 motif is present at residues 373–377 (QTEHH).

Belongs to the fatty acid desaturase type 1 family. Requires Fe(2+) as cofactor.

The protein resides in the membrane. In terms of biological role, fatty acid desaturase that introduces a cis double bond at the 8-position in 20-carbon polyunsaturated fatty acids incorporated in a glycerolipid that contain a Delta(8) double bond to yield (20:4(8,11,14,17)). The sequence is that of Acyl-lipid 8-desaturase from Rebecca salina (Marine microalga).